The chain runs to 247 residues: OCIA domain-containing protein 1 (247 aa).

Positions 1-112 (MNGRADFREP…KKLENSPLGE (112 aa)) constitute an OCIA domain. Residues Ser108, Ser116, and Ser123 each carry the phosphoserine modification. 2 disordered regions span residues 113–153 (ALRS…ADNI) and 167–230 (SASM…MQER). Polar residues-rich tracts occupy residues 136 to 146 (SNVSGQSSFGT) and 168 to 177 (ASMNESTPTG). 2 stretches are compositionally biased toward basic and acidic residues: residues 192–210 (ESPK…KNRE) and 218–230 (HKTD…MQER). Ser193 is modified (phosphoserine).

This sequence belongs to the OCIAD1 family. Interacts with OCIAD2. Interacts with STAT3. In terms of tissue distribution, expressed at high levels in the brain and at lower levels in the heart, ovary, testis and kidney. Expression is strongest in embryonic stem cells and in the blood vessels.

It localises to the endosome. In terms of biological role, maintains stem cell potency. Increases STAT3 phosphorylation and controls ERK phosphorylation. May act as a scaffold, increasing STAT3 recruitment onto endosomes. This chain is OCIA domain-containing protein 1, found in Mus musculus (Mouse).